A 700-amino-acid chain; its full sequence is UvrABC system protein C (700 aa).

The 80-residue stretch at 11-90 folds into the GIY-YIG domain; that stretch reads TTPGVYLYKD…IKKHRPRYNI (80 aa). The UVR domain maps to 200 to 235; the sequence is TELIDMLRADMQAASDALEFEEAALLRDQLQAVERT.

The protein belongs to the UvrC family. Interacts with UvrB in an incision complex.

The protein resides in the cytoplasm. In terms of biological role, the UvrABC repair system catalyzes the recognition and processing of DNA lesions. UvrC both incises the 5' and 3' sides of the lesion. The N-terminal half is responsible for the 3' incision and the C-terminal half is responsible for the 5' incision. The sequence is that of UvrABC system protein C from Oleidesulfovibrio alaskensis (strain ATCC BAA-1058 / DSM 17464 / G20) (Desulfovibrio alaskensis).